A 394-amino-acid chain; its full sequence is L-lactate 2-monooxygenase (394 aa).

The region spanning 19–394 (VAPTLPMSYA…LTIDALRPTR (376 aa)) is the FMN hydroxy acid dehydrogenase domain. Tyrosine 45 provides a ligand contact to a 2-oxocarboxylate. FMN is bound by residues 98–100 (PIG), serine 129, and glutamine 151. Position 153 (tyrosine 153) interacts with a 2-oxocarboxylate. An FMN-binding site is contributed by threonine 179. Arginine 188 is an a 2-oxocarboxylate binding site. FMN is bound at residue lysine 267. The active-site Proton acceptor is histidine 291. Arginine 294 contributes to the a 2-oxocarboxylate binding site. FMN is bound by residues 321 to 325 (DSGIR) and arginine 345.

It belongs to the FMN-dependent alpha-hydroxy acid dehydrogenase family. As to quaternary structure, homotetramer. The cofactor is FMN.

It carries out the reaction (S)-lactate + O2 = acetate + CO2 + H2O. In terms of biological role, catalyzes the oxidative decarboxylation of (S)-lactate (L-lactate) to acetate and carbon dioxide. Its physiological role remains unknown. This Mycolicibacterium smegmatis (Mycobacterium smegmatis) protein is L-lactate 2-monooxygenase.